Reading from the N-terminus, the 122-residue chain is MACNCPPQKNTACCSTSEAQDKCTCQKGNCECKACPNSTKTSESGGKASTCNCGGSGEACTCPPGQCACDKCPKKAKSVSTCGCGGSGAACSCPPGKCACDNCPKQAQEKVSSCACSGSGAA.

The segment at 1 to 35 (MACNCPPQKNTACCSTSEAQDKCTCQKGNCECKAC) is cys-rich copper-binding 1. The tract at residues 36 to 50 (PNSTKTSESGGKAST) is spacer B1. A cys-rich copper-binding 2 region spans residues 51–72 (CNCGGSGEACTCPPGQCACDKC). Positions 73-81 (PKKAKSVST) are spacer B2. The segment at 82-103 (CGCGGSGAACSCPPGKCACDNC) is cys-rich copper-binding 3. The tract at residues 104-113 (PKQAQEKVSS) is spacer B3. The segment at 114–122 (CACSGSGAA) is cys-rich copper-binding 4.

Belongs to the metallothionein superfamily.

It localises to the cytoplasm. It is found in the cell cortex. Functionally, copper metallothionein that protects the cell against copper toxicity by tightly chelating copper ions. Required for antioxidant-mediated growth rescue in the presence of fluconazole. Acts as a critical factors for lung colonization and virulence. The protein is Copper metallothionein 1 of Cryptococcus neoformans var. grubii serotype A (strain H99 / ATCC 208821 / CBS 10515 / FGSC 9487) (Filobasidiella neoformans var. grubii).